Reading from the N-terminus, the 954-residue chain is Isoleucine--tRNA ligase (954 aa).

Positions 60–70 (PYANGALHMGH) match the 'HIGH' region motif. E564 is an L-isoleucyl-5'-AMP binding site. The short motif at 605–609 (KMSKS) is the 'KMSKS' region element. Residue K608 coordinates ATP. Residues C923, C926, C943, and C946 each coordinate Zn(2+).

The protein belongs to the class-I aminoacyl-tRNA synthetase family. IleS type 1 subfamily. As to quaternary structure, monomer. Requires Zn(2+) as cofactor.

It is found in the cytoplasm. It catalyses the reaction tRNA(Ile) + L-isoleucine + ATP = L-isoleucyl-tRNA(Ile) + AMP + diphosphate. Its function is as follows. Catalyzes the attachment of isoleucine to tRNA(Ile). As IleRS can inadvertently accommodate and process structurally similar amino acids such as valine, to avoid such errors it has two additional distinct tRNA(Ile)-dependent editing activities. One activity is designated as 'pretransfer' editing and involves the hydrolysis of activated Val-AMP. The other activity is designated 'posttransfer' editing and involves deacylation of mischarged Val-tRNA(Ile). This chain is Isoleucine--tRNA ligase, found in Synechococcus sp. (strain ATCC 27144 / PCC 6301 / SAUG 1402/1) (Anacystis nidulans).